The following is an 880-amino-acid chain: Translation initiation factor IF-2 (880 aa).

Disordered regions lie at residues K51–G78, Y93–N116, and K142–P293. Residues S69–G78 are compositionally biased toward polar residues. The span at K142–D229 shows a compositional bias: basic and acidic residues. Over residues G269–R279 the composition is skewed to basic residues. Residues S380–S549 enclose the tr-type G domain. Residues G389–T396 form a G1 region. Position 389–396 (G389–T396) interacts with GTP. Residues G414–H418 form a G2 region. The G3 stretch occupies residues D435–G438. GTP contacts are provided by residues D435–H439 and N489–D492. The G4 stretch occupies residues N489–D492. Residues S525–K527 are G5.

This sequence belongs to the TRAFAC class translation factor GTPase superfamily. Classic translation factor GTPase family. IF-2 subfamily.

The protein resides in the cytoplasm. One of the essential components for the initiation of protein synthesis. Protects formylmethionyl-tRNA from spontaneous hydrolysis and promotes its binding to the 30S ribosomal subunits. Also involved in the hydrolysis of GTP during the formation of the 70S ribosomal complex. The sequence is that of Translation initiation factor IF-2 from Psychromonas ingrahamii (strain DSM 17664 / CCUG 51855 / 37).